Reading from the N-terminus, the 207-residue chain is Large ribosomal subunit protein uL4 (207 aa).

Positions 49–78 are disordered; that stretch reads HAVKNRSAVSGGGRKPWRQKGTGRARQGSI.

Belongs to the universal ribosomal protein uL4 family. In terms of assembly, part of the 50S ribosomal subunit.

In terms of biological role, one of the primary rRNA binding proteins, this protein initially binds near the 5'-end of the 23S rRNA. It is important during the early stages of 50S assembly. It makes multiple contacts with different domains of the 23S rRNA in the assembled 50S subunit and ribosome. Functionally, forms part of the polypeptide exit tunnel. The protein is Large ribosomal subunit protein uL4 of Streptococcus pneumoniae serotype 19F (strain G54).